We begin with the raw amino-acid sequence, 477 residues long: Otolin-1 (477 aa).

The first 23 residues, 1–23 (MWMFSWLCAILIILAIAGMNTIA), serve as a signal peptide directing secretion. Disordered regions lie at residues 28–55 (HTKF…PEEE) and 111–337 (QKGE…KGEL). Basic and acidic residues predominate over residues 33-42 (KKSEEREMPK). The region spanning 116-175 (GETGQPGPKGEAGNLGIPGPPGVVGPQGPRGYKGEKGLKGERGDQGVPGYPGKPGAQGEP) is the Collagen-like 1 domain. Residues Pro133 and Pro136 each carry the hydroxyproline modification. Positions 147 to 159 (YKGEKGLKGERGD) are enriched in basic and acidic residues. Pro163, Pro166, and Pro169 each carry hydroxyproline. 5-hydroxylysine is present on Lys178. O-linked (Gal...) hydroxylysine glycosylation is present at Lys178. Residues 182 to 191 (GNIGLGGVKG) show a composition bias toward gly residues. N-linked (GlcNAc...) asparagine glycosylation occurs at Asn202. 2 consecutive Collagen-like domains span residues 209-268 (GDQG…KGSK) and 278-337 (GRNG…KGEL). Position 223 is a hydroxyproline (Pro223). Basic and acidic residues-rich tracts occupy residues 226–240 (KGEK…EMGD) and 247–277 (SGER…EGKS). Hydroxyproline is present on residues Pro283 and Pro301. The segment covering 298–310 (LGPPGLLGPTGPK) has biased composition (low complexity). Position 310 is a 5-hydroxylysine (Lys310). Lys310 is a glycosylation site (O-linked (Gal...) hydroxylysine). Positions 338–473 (ARVPRSAFSA…GFLLYPEETS (136 aa)) constitute a C1q domain. An N-linked (GlcNAc...) asparagine glycan is attached at Asn381.

It belongs to the OTOL1 family. As to quaternary structure, homooligomer; disulfide-linked; probably forms homotrimers. Interacts with OC90. Interacts with CBLN1.

The protein localises to the secreted. Its subcellular location is the extracellular space. It localises to the extracellular matrix. Collagen-like protein specifically expressed in the inner ear, which provides an organic scaffold for otoconia, a calcium carbonate structure in the saccule and utricle of the ear. Acts as a scaffold for biomineralization: sequesters calcium and forms interconnecting fibrils between otoconia that are incorporated into the calcium crystal structure. Together with OC90, modulates calcite crystal morphology and growth kinetics. This chain is Otolin-1, found in Homo sapiens (Human).